Here is a 355-residue protein sequence, read N- to C-terminus: Polyferredoxin protein FwdF (355 aa).

4Fe-4S ferredoxin-type domains are found at residues 24–53 (RELCWNDELCVGCGICADICPVNAIAMGPL), 64–93 (PKLDIDKDVCVLCGMCASACPFDALDLKIN), 108–137 (RDIKVYQDKCVLCEQCEMVCPQGAIVVERE), 147–176 (GEININKEKCVLCGICAEYCPADAINLKYN), 187–216 (TDIEVDKDKCVFCKVCEFVCPHDAIEVICY), 235–264 (GKTVIDKDACVTCGWCAFICPAEAIEVEKP), 267–296 (GELIIDVNACNACGACISICPCSALEFPKP), and 304–333 (PRIIVNQNLCVLCGACAKACPVNAIKVKRT). Positions 33, 36, 39, 43, 73, 76, 79, 83, 117, 120, 123, 127, 156, 159, 162, 166, 196, 199, 202, 206, 244, 247, 250, 254, 276, 279, 282, 286, 313, 316, 319, and 323 each coordinate [4Fe-4S] cluster.

[4Fe-4S] cluster is required as a cofactor.

The chain is Polyferredoxin protein FwdF (fwdF) from Methanocaldococcus jannaschii (strain ATCC 43067 / DSM 2661 / JAL-1 / JCM 10045 / NBRC 100440) (Methanococcus jannaschii).